We begin with the raw amino-acid sequence, 410 residues long: Arginine deiminase (410 aa).

The active-site Amidino-cysteine intermediate is the Cys-399.

This sequence belongs to the arginine deiminase family.

Its subcellular location is the cytoplasm. The enzyme catalyses L-arginine + H2O = L-citrulline + NH4(+). It participates in amino-acid degradation; L-arginine degradation via ADI pathway; carbamoyl phosphate from L-arginine: step 1/2. The polypeptide is Arginine deiminase (Listeria monocytogenes serotype 4b (strain F2365)).